Here is a 161-residue protein sequence, read N- to C-terminus: D-amino-acid N-acetyltransferase HPA3 (161 aa).

At Ser2 the chain carries N-acetylserine. The region spanning 14 to 161 is the N-acetyltransferase domain; it reads IVVKAIEPKD…DKVLYKRNGY (148 aa). Residue 98–111 participates in acetyl-CoA binding; it reads LYVTERARVKGVGR.

Belongs to the acetyltransferase family. GNAT subfamily. Post-translationally, autoacetylates in an intermolecular reaction.

The protein resides in the cytoplasm. Its subcellular location is the nucleus. The catalysed reaction is a D-alpha-amino acid + acetyl-CoA = an N-acetyl-D-amino acid + CoA + H(+). Functionally, N-acetyltransferase that acts on a wide range of D-amino acids. Catalyzes the N-acetylation through an ordered bi-bi mechanism, in which acetyl-CoA is the first substrate to be bound and CoA is the last product to be liberated. D-amino acids are toxic for the cell and their N-acetylation, preceding removal from cells, plays an important role in detoxification of D-amino acids. In vitro, capable of acetylating histone H4 at 'Lys-8' and polyamines like putrescine, spermidine and spermine. This chain is D-amino-acid N-acetyltransferase HPA3, found in Saccharomyces cerevisiae (strain ATCC 204508 / S288c) (Baker's yeast).